We begin with the raw amino-acid sequence, 232 residues long: Phosphatidylserine decarboxylase proenzyme (232 aa).

S190 (schiff-base intermediate with substrate; via pyruvic acid) is an active-site residue. Position 190 is a pyruvic acid (Ser); by autocatalysis (S190).

This sequence belongs to the phosphatidylserine decarboxylase family. PSD-A subfamily. In terms of assembly, heterodimer of a large membrane-associated beta subunit and a small pyruvoyl-containing alpha subunit. Pyruvate is required as a cofactor. Post-translationally, is synthesized initially as an inactive proenzyme. Formation of the active enzyme involves a self-maturation process in which the active site pyruvoyl group is generated from an internal serine residue via an autocatalytic post-translational modification. Two non-identical subunits are generated from the proenzyme in this reaction, and the pyruvate is formed at the N-terminus of the alpha chain, which is derived from the carboxyl end of the proenzyme. The post-translation cleavage follows an unusual pathway, termed non-hydrolytic serinolysis, in which the side chain hydroxyl group of the serine supplies its oxygen atom to form the C-terminus of the beta chain, while the remainder of the serine residue undergoes an oxidative deamination to produce ammonia and the pyruvoyl prosthetic group on the alpha chain.

It is found in the cell membrane. The enzyme catalyses a 1,2-diacyl-sn-glycero-3-phospho-L-serine + H(+) = a 1,2-diacyl-sn-glycero-3-phosphoethanolamine + CO2. Its pathway is phospholipid metabolism; phosphatidylethanolamine biosynthesis; phosphatidylethanolamine from CDP-diacylglycerol: step 2/2. In terms of biological role, catalyzes the formation of phosphatidylethanolamine (PtdEtn) from phosphatidylserine (PtdSer). In Rhodopseudomonas palustris (strain HaA2), this protein is Phosphatidylserine decarboxylase proenzyme.